A 224-amino-acid chain; its full sequence is UPF0758 protein AFE_0358 (224 aa).

The 123-residue stretch at 102–224 folds into the MPN domain; sequence GLDSPLRVRQ…PLSLREQGGW (123 aa). Positions 173, 175, and 186 each coordinate Zn(2+). Positions 173–186 match the JAMM motif motif; that stretch reads HNHPSGVAEPSAAD.

Belongs to the UPF0758 family.

This Acidithiobacillus ferrooxidans (strain ATCC 23270 / DSM 14882 / CIP 104768 / NCIMB 8455) (Ferrobacillus ferrooxidans (strain ATCC 23270)) protein is UPF0758 protein AFE_0358.